A 323-amino-acid polypeptide reads, in one-letter code: Melanocortin receptor 3 (323 aa).

Over Met1–Gln37 the chain is Extracellular. N-linked (GlcNAc...) asparagine glycosylation is found at Asn2, Asn16, and Asn28. A helical transmembrane segment spans residues Val38–Val63. The Cytoplasmic portion of the chain corresponds to Val64–Phe75. A helical membrane pass occupies residues Phe76–Val100. Topologically, residues Ile101–Asn118 are extracellular. The helical transmembrane segment at Ile119–Ile140 threads the bilayer. Residues Asp141–Lys160 are Cytoplasmic-facing. Residues Ala161–Ile181 form a helical membrane-spanning segment. At Tyr182 to Lys186 the chain is on the extracellular side. The helical transmembrane segment at Met187–Met210 threads the bilayer. Residues Phe211 to Thr245 are Cytoplasmic-facing. A helical membrane pass occupies residues Ile246 to Cys268. The Extracellular segment spans residues Pro269 to Tyr277. The chain crosses the membrane as a helical span at residues Thr278–Phe301. Topologically, residues Arg302–Gly323 are cytoplasmic. Cys315 carries the S-palmitoyl cysteine lipid modification.

Belongs to the G-protein coupled receptor 1 family. As to expression, brain.

It localises to the cell membrane. Receptor for MSH (alpha, beta and gamma) and ACTH. This receptor is mediated by G proteins which activate adenylate cyclase. Required for expression of anticipatory patterns of activity and wakefulness during periods of limited nutrient availability and for the normal regulation of circadian clock activity in the brain. In Mus musculus (Mouse), this protein is Melanocortin receptor 3 (Mc3r).